The following is a 420-amino-acid chain: Tubulin epsilon and delta complex protein 1 (420 aa).

Residues 276-340 (SEGGLGELES…AVQQELAALQ (65 aa)) are a coiled coil. The span at 342-351 (SWEQSSTPGQ) shows a compositional bias: polar residues. Residues 342–369 (SWEQSSTPGQPQRPHRLVRSKDGAPRPQ) are disordered. Residues 377–409 (IRTLSAKEACLKKALHQLQRQCQQELARLAGAL) adopt a coiled-coil conformation.

Interacts with TEDC2. Found in a complex with TEDC1, TEDC2, TUBE1 and TUBD1.

Its subcellular location is the cell projection. The protein localises to the cilium. It is found in the cytoplasm. It localises to the cytoskeleton. The protein resides in the microtubule organizing center. Its subcellular location is the centrosome. The protein localises to the centriole. Functionally, acts as a positive regulator of ciliary hedgehog signaling. Required for centriole stability. May play a role in counteracting perturbation of actin filaments, such as after treatment with the actin depolymerizing microbial metabolite Chivosazole F. This Mus musculus (Mouse) protein is Tubulin epsilon and delta complex protein 1.